We begin with the raw amino-acid sequence, 66 residues long: Cytochrome b-c1 complex subunit 9, mitochondrial (66 aa).

At 2 to 17 the chain is on the mitochondrial matrix side; it reads SFSSLYKTFFKRNAVF. The helical transmembrane segment at 18 to 43 threads the bilayer; the sequence is VGTIFAGAFVFQTVFDTAITSWYENH. Residues 44 to 66 are Mitochondrial intermembrane-facing; that stretch reads NKGKLWKDVKARIAAGDGDDDDE.

It belongs to the UQCR10/QCR9 family. Component of the ubiquinol-cytochrome c oxidoreductase (cytochrome b-c1 complex, complex III, CIII), a multisubunit enzyme composed of 10 subunits. The complex is composed of 3 respiratory subunits cytochrome b (COB), cytochrome c1 (CYT1) and Rieske protein (RIP1), 2 core protein subunits COR1 and QCR2, and 5 low-molecular weight protein subunits QCR6, QCR7, QCR8, QCR9 and QCR10. The complex exists as an obligatory dimer and forms supercomplexes (SCs) in the inner mitochondrial membrane with a monomer or a dimer of cytochrome c oxidase (complex IV, CIV), resulting in 2 different assemblies (supercomplexes III(2)IV and III(2)IV(2)). Interacts with the transmembrane segment of RIP1.

The protein resides in the mitochondrion inner membrane. Its function is as follows. Component of the ubiquinol-cytochrome c oxidoreductase, a multisubunit transmembrane complex that is part of the mitochondrial electron transport chain which drives oxidative phosphorylation. The respiratory chain contains 3 multisubunit complexes succinate dehydrogenase (complex II, CII), ubiquinol-cytochrome c oxidoreductase (cytochrome b-c1 complex, complex III, CIII) and cytochrome c oxidase (complex IV, CIV), that cooperate to transfer electrons derived from NADH and succinate to molecular oxygen, creating an electrochemical gradient over the inner membrane that drives transmembrane transport and the ATP synthase. The cytochrome b-c1 complex catalyzes electron transfer from ubiquinol to cytochrome c, linking this redox reaction to translocation of protons across the mitochondrial inner membrane, with protons being carried across the membrane as hydrogens on the quinol. In the process called Q cycle, 2 protons are consumed from the matrix, 4 protons are released into the intermembrane space and 2 electrons are passed to cytochrome c. This Saccharomyces cerevisiae (strain ATCC 204508 / S288c) (Baker's yeast) protein is Cytochrome b-c1 complex subunit 9, mitochondrial (QCR9).